Here is a 234-residue protein sequence, read N- to C-terminus: MRKTRLWGLLWMLFVSELRAATKLTEEKYELKEGQTLDVKCDYTLEKFASSQKAWQIIRDGEMPKTLACTERPSKNSHPVQVGRIILEDYHDHGLLRVRMVNLQVEDSGLYQCVIYQPPKEPHMLFDRIRLVVTKGFSGTPGSNENSTQNVYKIPPTTTKALCPLYTSPRTVTQAPPKSTADVSTPDSEINLTNVTDIIRVPVFNIVILLAGGFLSKSLVFSVLFAVTLRSFVP.

The first 20 residues, 1–20, serve as a signal peptide directing secretion; the sequence is MRKTRLWGLLWMLFVSELRA. The Extracellular segment spans residues 21–205; it reads ATKLTEEKYE…TDIIRVPVFN (185 aa). Residues 26–134 enclose the Ig-like V-type domain; it reads EEKYELKEGQ…LFDRIRLVVT (109 aa). A disulfide bridge connects residues cysteine 41 and cysteine 113. 3 N-linked (GlcNAc...) asparagine glycosylation sites follow: asparagine 146, asparagine 191, and asparagine 194. A helical transmembrane segment spans residues 206 to 226; sequence IVILLAGGFLSKSLVFSVLFA. At 227-234 the chain is on the cytoplasmic side; that stretch reads VTLRSFVP.

In terms of assembly, monomer. Homomultimer; when activated. Interacts with TYROBP/DAP12. Interacts with TLR4. Post-translationally, glycosylated. In terms of tissue distribution, mostly expressed by immune cells of the myeloid lineage, such as monocytes, macrophages, neutrophils and dendritic cells. Expression is associated with a mature stage of myeloid development. Highly expressed in adult liver, lung and spleen than in corresponding fetal tissue. Also expressed in the lymph node, placenta, spinal cord and heart tissues. Isoform 2 was detected in the lung, liver and mature monocytes.

It is found in the cell membrane. The protein localises to the secreted. Functionally, cell surface receptor that plays important roles in innate and adaptive immunity by amplifying inflammatory responses. Upon activation by various ligands such as PGLYRP1, HMGB1 or HSP70, multimerizes and forms a complex with transmembrane adapter TYROBP/DAP12. In turn, initiates a SYK-mediated cascade of tyrosine phosphorylation, activating multiple downstream mediators such as BTK, MAPK1, MAPK3 or phospholipase C-gamma. This cascade promotes the neutrophil- and macrophage-mediated release of pro-inflammatory cytokines and/or chemokines, as well as their migration and thereby amplifies inflammatory responses that are triggered by bacterial and fungal infections. By also promoting the amplification of inflammatory signals that are initially triggered by Toll-like receptor (TLR) and NOD-like receptor engagement, plays a major role in the pathophysiology of acute and chronic inflammatory diseases of different etiologies including septic shock and atherosclerosis. Acts as a decoy receptor, counterbalancing TREM1 pro-inflammatory activity through the neutralization of its ligand. The sequence is that of Triggering receptor expressed on myeloid cells 1 (TREM1) from Homo sapiens (Human).